A 335-amino-acid chain; its full sequence is Beta-ketoacyl-[acyl-carrier-protein] synthase III 3 (335 aa).

Active-site residues include cysteine 114 and histidine 256. Residues 257–261 (QANHR) form an ACP-binding region. The active site involves asparagine 286.

Belongs to the thiolase-like superfamily. FabH family. As to quaternary structure, homodimer.

Its subcellular location is the cytoplasm. The catalysed reaction is malonyl-[ACP] + acetyl-CoA + H(+) = 3-oxobutanoyl-[ACP] + CO2 + CoA. It participates in lipid metabolism; fatty acid biosynthesis. Functionally, catalyzes the condensation reaction of fatty acid synthesis by the addition to an acyl acceptor of two carbons from malonyl-ACP. Catalyzes the first condensation reaction which initiates fatty acid synthesis and may therefore play a role in governing the total rate of fatty acid production. Possesses both acetoacetyl-ACP synthase and acetyl transacylase activities. Its substrate specificity determines the biosynthesis of branched-chain and/or straight-chain of fatty acids. This chain is Beta-ketoacyl-[acyl-carrier-protein] synthase III 3, found in Streptomyces coelicolor (strain ATCC BAA-471 / A3(2) / M145).